A 1239-amino-acid chain; its full sequence is Structural polyprotein (1239 aa).

Positions 1-35 (MFPYPTLNYPPMAPINPMAYRDPNPPRQVAPFRPP) are necessary for nucleocapsid assembly and virus assembly. Residues 1–101 (MFPYPTLNYP…RKPKPGKRQR (101 aa)) form a disordered region. Residues 23 to 34 (PNPPRQVAPFRP) show a composition bias toward pro residues. The host transcription inhibition stretch occupies residues 36-69 (LAAQIEDLRRSIANLTLKQRAPNPPAGPPAKRKK). Positions 43–50 (LRRSIANL) match the Supraphysiological nuclear export signal motif. Residue Asn-49 is glycosylated (N-linked (GlcNAc...) asparagine; by host). The Nuclear localization signal signature appears at 66–69 (KRKK). The span at 79–101 (KKKRPPPPAKKQKRKPKPGKRQR) shows a compositional bias: basic residues. The tract at residues 81-111 (KRPPPPAKKQKRKPKPGKRQRMCMKLESDKT) is binding to the viral RNA. Residues 96–110 (PGKRQRMCMKLESDK) are ribosome-binding. The residue at position 108 (Ser-108) is a Phosphoserine. The region spanning 110-259 (KTFPIMLNGQ…KDTPEGSEPW (150 aa)) is the Peptidase S3 domain. The residue at position 111 (Thr-111) is a Phosphothreonine. Residue His-136 is the Charge relay system of the active site. The tract at residues 152-157 (KKASIY) is interaction with spike glycoprotein E2. Residues Asp-158 and Ser-210 each act as charge relay system in the active site. Residues 244 to 248 (QKGVT) are interaction with spike glycoprotein E2. A functions as an uncleaved signal peptide for the precursor of protein E3/E2 region spans residues 260–271 (SLATVMCVLANI). The Extracellular portion of the chain corresponds to 260–681 (SLATVMCVLA…HVVVVYYYNR (422 aa)). 9 disulfides stabilise this stretch: Cys-266-Cys-275, Cys-280-Cys-284, Cys-283-Cys-315, Cys-341-Cys-444, Cys-344-Cys-349, Cys-411-Cys-425, Cys-472-Cys-585, Cys-521-Cys-545, and Cys-523-Cys-539. An N-linked (GlcNAc...) asparagine; by host glycan is attached at Asn-270. Asn-637 is a glycosylation site (N-linked (GlcNAc...) asparagine; by host). The chain crosses the membrane as a helical span at residues 682–702 (YPLTTIIGLCTCVAIIMVSCD). Over 703–742 (HPCGSFSGLRNLCITPYKLAPNAQVPILLALLCCIKPTRA) the chain is Cytoplasmic. The S-palmitoyl cysteine; by host moiety is linked to residue Cys-705. Residues 710-714 (GLRNL) are interaction with the capsid protein. A transient transmembrane before p62-6K protein processing region spans residues 714 to 734 (LCITPYKLAPNAQVPILLALL). 3 S-palmitoyl cysteine; by host lipidation sites follow: Cys-715, Cys-735, and Cys-736. Residues Cys-715 and Cys-736 are joined by a disulfide bond. Residues 743 to 754 (DDTLQVLNYLWN) are Extracellular-facing. The helical transmembrane segment at 755 to 775 (NNQNFFWMQTLIPLAALIVCM) threads the bilayer. A topological domain (cytoplasmic) is located at residue Arg-776. Residues 777-797 (MLAALFCCGPAFLLVCGAWAA) traverse the membrane as a helical segment. The Extracellular portion of the chain corresponds to 798–1215 (AYEHTAVMPN…WSWLKVLVGG (418 aa)). Intrachain disulfides connect Cys-847/Cys-912, Cys-860/Cys-892, Cys-861/Cys-894, and Cys-866/Cys-876. An E1 fusion peptide loop region spans residues 882–899 (VYPFMWGGAYCFCDTENT). 2 N-linked (GlcNAc...) asparagine; by host glycosylation sites follow: Asn-932 and Asn-1069. 3 disulfides stabilise this stretch: Cys-1058-Cys-1070, Cys-1100-Cys-1175, and Cys-1105-Cys-1179. The helical transmembrane segment at 1216 to 1236 (TSAFIVLGLIATAVVALVLFF) threads the bilayer. The Cytoplasmic portion of the chain corresponds to 1237-1239 (HRH).

Homodimer. Homomultimer. Interacts with host karyopherin KPNA4; this interaction allows the nuclear import of the viral capsid protein. Interacts with spike glycoprotein E2. Interacts with host IRAK1; the interaction leads to inhibition of IRAK1-dependent signaling. Part of a tetrameric complex composed of host CRM1, host importin alpha/beta dimer and the viral capsid; this complex blocks the receptor-mediated transport through the nuclear pore. Interacts with host phosphatase PPP1CA; this interaction dephosphorylates the capsid protein, which increases its ability to bind to the viral genome. As to quaternary structure, the precursor of protein E3/E2 and E1 form a heterodimer shortly after synthesis. In terms of assembly, the precursor of protein E3/E2 and E1 form a heterodimer shortly after synthesis. Processing of the precursor of protein E3/E2 into E2 and E3 results in a heterodimer of the spike glycoproteins E2 and E1. Spike at virion surface are constituted of three E2-E1 heterodimers. After target cell attachment and endocytosis, E1 change conformation to form homotrimers. E2-E1 heterodimers interact with host VLDLR or LRP8/APOER2 to mediate viral entry. Interacts with 6K protein. Interacts with spike glycoprotein E1. Processing of the precursor of protein E3/E2 into E2 and E3 results in a heterodimer of the spike glycoproteins E2 and E1. Spike at virion surface are constituted of a trimer of E2-E1 heterodimers. Interacts with 6K protein. E2-E1 heterodimers interact with host VLDLR or LRP8/APOER2 to mediate viral entry. Interacts (via E2-A) with host VLDLR (via class A repeats); this interaction mediates viral entry into host cell. Interacts with host LRP8/APOER2 (via class A repeats); this interaction mediates viral entry into host cell. As to quaternary structure, oligomer. Interacts with spike glycoprotein E1. Interacts with spike glycoprotein E2. Post-translationally, structural polyprotein: Specific enzymatic cleavages in vivo yield mature proteins. Capsid protein is auto-cleaved during polyprotein translation, unmasking a signal peptide at the N-terminus of the precursor of E3/E2. The remaining polyprotein is then targeted to the host endoplasmic reticulum, where host signal peptidase cleaves it into pE2, 6K and E1 proteins. pE2 is further processed to mature E3 and E2 by host furin in trans-Golgi vesicle. In terms of processing, phosphorylated on serine and threonine residues. Palmitoylated via thioester bonds. These palmitoylations may induce disruption of the C-terminus transmembrane. This would result in the reorientation of E2 C-terminus from lumenal to cytoplasmic side. Post-translationally, N-glycosylated. In terms of processing, palmitoylated via thioester bonds.

The protein resides in the virion. It localises to the host cytoplasm. It is found in the host cell membrane. The protein localises to the host nucleus. Its subcellular location is the virion membrane. The protein resides in the host Golgi apparatus. It localises to the host trans-Golgi network. It is found in the host endoplasmic reticulum. It carries out the reaction Autocatalytic release of the core protein from the N-terminus of the togavirus structural polyprotein by hydrolysis of a -Trp-|-Ser- bond.. Forms an icosahedral capsid with a T=4 symmetry composed of 240 copies of the capsid protein surrounded by a lipid membrane through which penetrate 80 spikes composed of trimers of E1-E2 heterodimers. The capsid protein binds to the viral RNA genome at a site adjacent to a ribosome binding site for viral genome translation following genome release. Possesses a protease activity that results in its autocatalytic cleavage from the nascent structural protein. Following its self-cleavage, the capsid protein transiently associates with ribosomes, and within several minutes the protein binds to viral RNA and rapidly assembles into icosahedric core particles. The resulting nucleocapsid eventually associates with the cytoplasmic domain of the spike glycoprotein E2 at the cell membrane, leading to budding and formation of mature virions. In case of infection, new virions attach to target cells and after clathrin-mediated endocytosis their membrane fuses with the host endosomal membrane. This leads to the release of the nucleocapsid into the cytoplasm, followed by an uncoating event necessary for the genomic RNA to become accessible. The uncoating might be triggered by the interaction of capsid proteins with ribosomes. Binding of ribosomes would release the genomic RNA since the same region is genomic RNA-binding and ribosome-binding. Specifically inhibits interleukin-1 receptor-associated kinase 1/IRAK1-dependent signaling during viral entry, representing a means by which the alphaviruses may evade innate immune detection and activation prior to viral gene expression. Inhibits host transcription. Forms a tetrameric complex with XPO1/CRM1 and the nuclear import receptor importin. This complex blocks the central channel of host nuclear pores thereby inhibiting the receptor-mediated nuclear transport and thus the host mRNA and rRNA transcription. The inhibition of transcription is linked to a cytopathic effect on the host cell. In terms of biological role, provides the signal sequence for the translocation of the precursor of protein E3/E2 to the host endoplasmic reticulum. Furin-cleaved E3 remains associated with spike glycoprotein E1 and mediates pH protection of the latter during the transport via the secretory pathway. After virion release from the host cell, the assembly protein E3 is gradually released in the extracellular space. Functionally, plays a role in viral attachment to target host cell, by binding to the cell receptors VLDLR or LRP8/APOER2. Synthesized as a p62 precursor which is processed by furin at the cell membrane just before virion budding, giving rise to E2-E1 heterodimer. The p62-E1 heterodimer is stable, whereas E2-E1 is unstable and dissociate at low pH. p62 is processed at the last step, presumably to avoid E1 fusion activation before its final export to cell surface. E2 C-terminus contains a transitory transmembrane that would be disrupted by palmitoylation, resulting in reorientation of the C-terminal tail from lumenal to cytoplasmic side. This step is critical since E2 C-terminus is involved in budding by interacting with capsid proteins. This release of E2 C-terminus in cytoplasm occurs lately in protein export, and precludes premature assembly of particles at the endoplasmic reticulum membrane. Its function is as follows. Acts as a viroporin that participates in virus glycoprotein processing and transport to the plasma membrane, cell permeabilization and budding of viral particles. Disrupts the calcium homeostasis of the cell, probably at the endoplasmic reticulum level. This leads to cytoplasmic calcium elevation. Because of its lipophilic properties, the 6K protein is postulated to influence the selection of lipids that interact with the transmembrane domains of the glycoproteins, which, in turn, affects the deformability of the bilayer required for the extreme curvature that occurs as budding proceeds. Present in low amount in virions, about 3% compared to viral glycoproteins. Class II viral fusion protein. Fusion activity is inactive as long as E1 is bound to E2 in mature virion. After virus attachment to target cell via host VLDLR or LRP8/APOER2 and endocytosis, acidification of the endosome induces dissociation of E1/E2 heterodimer and concomitant trimerization of the E1 subunits. This E1 trimer is fusion active, and promotes release of viral nucleocapsid in cytoplasm after endosome and viral membrane fusion. Efficient fusion requires the presence of cholesterol and sphingolipid in the target membrane. This Aedes (Human) protein is Structural polyprotein.